The primary structure comprises 1126 residues: Translation initiation factor IF-2 (1126 aa).

The disordered stretch occupies residues 63–519 (LSINKPSIKK…TTRQRQKRRA (457 aa)). Positions 70–83 (IKKDNFKQNKEDKS) are enriched in basic and acidic residues. Over residues 93–111 (PLKNNSNKKPLLIKPLNKP) the composition is skewed to low complexity. The span at 116–151 (KISNQLQNPNKPNIVNSSQSRANLTNTNSKPSQNFN) shows a compositional bias: polar residues. The span at 161 to 171 (TPPPIKSPAKP) shows a compositional bias: pro residues. Positions 181–195 (NINNNVKSSESSQNI) are enriched in polar residues. Low complexity-rich tracts occupy residues 211–224 (NTNKPKTKNFNNRK) and 240–252 (IINPNKQNNNKQN). Positions 254–264 (AFKQTASNRPG) are enriched in polar residues. Low complexity-rich tracts occupy residues 291–315 (NRQGNPNRPGSPNRPGMPNRPGLRN) and 327–349 (NRQGNPNRPGSPNGPGMPNNRPG). A compositionally biased stretch (basic and acidic residues) spans 429–443 (GKTDWDDSAKLEALR). Positions 501-517 (KQFKKKKKETTRQRQKR) are enriched in basic residues. Positions 618–790 (RRPPVITVMG…ILLVSDVEDL (173 aa)) constitute a tr-type G domain. Residues 627-634 (GHVDHGKT) are G1. A GTP-binding site is contributed by 627–634 (GHVDHGKT). The interval 652–656 (GITQH) is G2. Residues 677-680 (DTPG) are G3. GTP contacts are provided by residues 677-681 (DTPGH) and 731-734 (NKID). The G4 stretch occupies residues 731-734 (NKID). A G5 region spans residues 767–769 (SAI).

It belongs to the TRAFAC class translation factor GTPase superfamily. Classic translation factor GTPase family. IF-2 subfamily.

It localises to the cytoplasm. Functionally, one of the essential components for the initiation of protein synthesis. Protects formylmethionyl-tRNA from spontaneous hydrolysis and promotes its binding to the 30S ribosomal subunits. Also involved in the hydrolysis of GTP during the formation of the 70S ribosomal complex. In Prochlorococcus marinus (strain AS9601), this protein is Translation initiation factor IF-2.